We begin with the raw amino-acid sequence, 941 residues long: UvrABC system protein A (941 aa).

Residue 31 to 38 (GLSGSGKS) coordinates ATP. The C4-type zinc finger occupies 253 to 280 (CPICGYSMRELEPRLFSFNNPAGACPTC). 2 consecutive ABC transporter domains span residues 310 to 587 (WDRR…PESL) and 607 to 937 (ANPE…RFLK). 640 to 647 (GVSGSGKS) lines the ATP pocket. A C4-type zinc finger spans residues 740–766 (CEACQGDGVIKVEMHFLPDIYVPCDQC).

Belongs to the ABC transporter superfamily. UvrA family. As to quaternary structure, forms a heterotetramer with UvrB during the search for lesions.

The protein resides in the cytoplasm. In terms of biological role, the UvrABC repair system catalyzes the recognition and processing of DNA lesions. UvrA is an ATPase and a DNA-binding protein. A damage recognition complex composed of 2 UvrA and 2 UvrB subunits scans DNA for abnormalities. When the presence of a lesion has been verified by UvrB, the UvrA molecules dissociate. In Salmonella typhi, this protein is UvrABC system protein A.